A 270-amino-acid polypeptide reads, in one-letter code: Acyl-[acyl-carrier-protein]--UDP-N-acetylglucosamine O-acyltransferase (270 aa).

It belongs to the transferase hexapeptide repeat family. LpxA subfamily. In terms of assembly, homotrimer.

The protein localises to the cytoplasm. The enzyme catalyses a (3R)-hydroxyacyl-[ACP] + UDP-N-acetyl-alpha-D-glucosamine = a UDP-3-O-[(3R)-3-hydroxyacyl]-N-acetyl-alpha-D-glucosamine + holo-[ACP]. It participates in glycolipid biosynthesis; lipid IV(A) biosynthesis; lipid IV(A) from (3R)-3-hydroxytetradecanoyl-[acyl-carrier-protein] and UDP-N-acetyl-alpha-D-glucosamine: step 1/6. In terms of biological role, involved in the biosynthesis of lipid A, a phosphorylated glycolipid that anchors the lipopolysaccharide to the outer membrane of the cell. The protein is Acyl-[acyl-carrier-protein]--UDP-N-acetylglucosamine O-acyltransferase of Helicobacter acinonychis (strain Sheeba).